The primary structure comprises 391 residues: Sulfate adenylyltransferase (391 aa).

Belongs to the sulfate adenylyltransferase family.

It carries out the reaction sulfate + ATP + H(+) = adenosine 5'-phosphosulfate + diphosphate. It functions in the pathway sulfur metabolism; hydrogen sulfide biosynthesis; sulfite from sulfate: step 1/3. This is Sulfate adenylyltransferase from Lactiplantibacillus plantarum (strain ATCC BAA-793 / NCIMB 8826 / WCFS1) (Lactobacillus plantarum).